The sequence spans 384 residues: 8-amino-7-oxononanoate synthase (384 aa).

Arg21 lines the substrate pocket. 108 to 109 (GF) is a binding site for pyridoxal 5'-phosphate. His133 is a substrate binding site. Residues Ser179, His207, and Thr233 each contribute to the pyridoxal 5'-phosphate site. Lys236 carries the post-translational modification N6-(pyridoxal phosphate)lysine. Thr352 lines the substrate pocket.

This sequence belongs to the class-II pyridoxal-phosphate-dependent aminotransferase family. BioF subfamily. Homodimer. It depends on pyridoxal 5'-phosphate as a cofactor.

It carries out the reaction 6-carboxyhexanoyl-[ACP] + L-alanine + H(+) = (8S)-8-amino-7-oxononanoate + holo-[ACP] + CO2. It participates in cofactor biosynthesis; biotin biosynthesis. Functionally, catalyzes the decarboxylative condensation of pimeloyl-[acyl-carrier protein] and L-alanine to produce 8-amino-7-oxononanoate (AON), [acyl-carrier protein], and carbon dioxide. This Escherichia coli O157:H7 protein is 8-amino-7-oxononanoate synthase.